A 121-amino-acid polypeptide reads, in one-letter code: Two-component response regulator ORR8 (121 aa).

The 117-residue stretch at 5–121 folds into the Response regulatory domain; it reads HVLVVDDTHV…VDVPRIMKYI (117 aa). 4-aspartylphosphate is present on D55.

This sequence belongs to the ARR family. Type-A subfamily. In terms of processing, two-component system major event consists of a His-to-Asp phosphorelay between a sensor histidine kinase (HK) and a response regulator (RR). In plants, the His-to-Asp phosphorelay involves an additional intermediate named Histidine-containing phosphotransfer protein (HPt). This multistep phosphorelay consists of a His-Asp-His-Asp sequential transfer of a phosphate group between first a His and an Asp of the HK protein, followed by the transfer to a conserved His of the HPt protein and finally the transfer to an Asp in the receiver domain of the RR protein. Expressed in mature leaves, and at low levels in roots, shoots and flowers.

Functions as a response regulator involved in His-to-Asp phosphorelay signal transduction system. Phosphorylation of the Asp residue in the receiver domain activates the ability of the protein to promote the transcription of target genes. Type-A response regulators seem to act as negative regulators of the cytokinin signaling. In Oryza sativa subsp. indica (Rice), this protein is Two-component response regulator ORR8.